A 106-amino-acid polypeptide reads, in one-letter code: Large ribosomal subunit protein uL24 (106 aa).

It belongs to the universal ribosomal protein uL24 family. Part of the 50S ribosomal subunit.

In terms of biological role, one of two assembly initiator proteins, it binds directly to the 5'-end of the 23S rRNA, where it nucleates assembly of the 50S subunit. One of the proteins that surrounds the polypeptide exit tunnel on the outside of the subunit. The chain is Large ribosomal subunit protein uL24 from Bordetella avium (strain 197N).